Here is a 162-residue protein sequence, read N- to C-terminus: 2-C-methyl-D-erythritol 2,4-cyclodiphosphate synthase (162 aa).

The a divalent metal cation site is built by aspartate 9 and histidine 11. 4-CDP-2-C-methyl-D-erythritol 2-phosphate is bound by residues 9–11 and 37–38; these read DFH and HS. Histidine 45 provides a ligand contact to a divalent metal cation. 4-CDP-2-C-methyl-D-erythritol 2-phosphate-binding positions include 59–61, 64–68, 135–138, and arginine 145; these read DIG, FPDTD, and TTSE.

It belongs to the IspF family. As to quaternary structure, homotrimer. A divalent metal cation is required as a cofactor.

It carries out the reaction 4-CDP-2-C-methyl-D-erythritol 2-phosphate = 2-C-methyl-D-erythritol 2,4-cyclic diphosphate + CMP. The protein operates within isoprenoid biosynthesis; isopentenyl diphosphate biosynthesis via DXP pathway; isopentenyl diphosphate from 1-deoxy-D-xylulose 5-phosphate: step 4/6. In terms of biological role, involved in the biosynthesis of isopentenyl diphosphate (IPP) and dimethylallyl diphosphate (DMAPP), two major building blocks of isoprenoid compounds. Catalyzes the conversion of 4-diphosphocytidyl-2-C-methyl-D-erythritol 2-phosphate (CDP-ME2P) to 2-C-methyl-D-erythritol 2,4-cyclodiphosphate (ME-CPP) with a corresponding release of cytidine 5-monophosphate (CMP). This chain is 2-C-methyl-D-erythritol 2,4-cyclodiphosphate synthase, found in Leptospira biflexa serovar Patoc (strain Patoc 1 / Ames).